We begin with the raw amino-acid sequence, 572 residues long: Glutamate--tRNA ligase (572 aa).

Positions 112-122 (PNPNGPPSLGN) match the 'HIGH' region motif.

It belongs to the class-I aminoacyl-tRNA synthetase family. Glutamate--tRNA ligase type 2 subfamily.

It is found in the cytoplasm. The catalysed reaction is tRNA(Glu) + L-glutamate + ATP = L-glutamyl-tRNA(Glu) + AMP + diphosphate. Catalyzes the attachment of glutamate to tRNA(Glu) in a two-step reaction: glutamate is first activated by ATP to form Glu-AMP and then transferred to the acceptor end of tRNA(Glu). In Methanocella arvoryzae (strain DSM 22066 / NBRC 105507 / MRE50), this protein is Glutamate--tRNA ligase.